A 348-amino-acid polypeptide reads, in one-letter code: Holliday junction branch migration complex subunit RuvB (348 aa).

Positions T4–Y198 are large ATPase domain (RuvB-L). Residues L37, R38, G79, K82, T83, T84, E145 to F147, R188, Y198, and R235 each bind ATP. T83 contacts Mg(2+). Positions P199 to Q269 are small ATPAse domain (RuvB-S). The interval S272 to R348 is head domain (RuvB-H). DNA-binding residues include R327 and R332.

It belongs to the RuvB family. Homohexamer. Forms an RuvA(8)-RuvB(12)-Holliday junction (HJ) complex. HJ DNA is sandwiched between 2 RuvA tetramers; dsDNA enters through RuvA and exits via RuvB. An RuvB hexamer assembles on each DNA strand where it exits the tetramer. Each RuvB hexamer is contacted by two RuvA subunits (via domain III) on 2 adjacent RuvB subunits; this complex drives branch migration. In the full resolvosome a probable DNA-RuvA(4)-RuvB(12)-RuvC(2) complex forms which resolves the HJ.

It is found in the cytoplasm. The enzyme catalyses ATP + H2O = ADP + phosphate + H(+). The RuvA-RuvB-RuvC complex processes Holliday junction (HJ) DNA during genetic recombination and DNA repair, while the RuvA-RuvB complex plays an important role in the rescue of blocked DNA replication forks via replication fork reversal (RFR). RuvA specifically binds to HJ cruciform DNA, conferring on it an open structure. The RuvB hexamer acts as an ATP-dependent pump, pulling dsDNA into and through the RuvAB complex. RuvB forms 2 homohexamers on either side of HJ DNA bound by 1 or 2 RuvA tetramers; 4 subunits per hexamer contact DNA at a time. Coordinated motions by a converter formed by DNA-disengaged RuvB subunits stimulates ATP hydrolysis and nucleotide exchange. Immobilization of the converter enables RuvB to convert the ATP-contained energy into a lever motion, pulling 2 nucleotides of DNA out of the RuvA tetramer per ATP hydrolyzed, thus driving DNA branch migration. The RuvB motors rotate together with the DNA substrate, which together with the progressing nucleotide cycle form the mechanistic basis for DNA recombination by continuous HJ branch migration. Branch migration allows RuvC to scan DNA until it finds its consensus sequence, where it cleaves and resolves cruciform DNA. This Bifidobacterium longum (strain DJO10A) protein is Holliday junction branch migration complex subunit RuvB.